We begin with the raw amino-acid sequence, 580 residues long: Putative Xaa-Pro dipeptidyl-peptidase (580 aa).

Active-site charge relay system residues include S207, D319, and H350.

The protein belongs to the peptidase S15 family.

The enzyme catalyses Hydrolyzes Xaa-Pro-|- bonds to release unblocked, N-terminal dipeptides from substrates including Ala-Pro-|-p-nitroanilide and (sequentially) Tyr-Pro-|-Phe-Pro-|-Gly-Pro-|-Ile.. The sequence is that of Putative Xaa-Pro dipeptidyl-peptidase from Bacillus cereus (strain ATCC 14579 / DSM 31 / CCUG 7414 / JCM 2152 / NBRC 15305 / NCIMB 9373 / NCTC 2599 / NRRL B-3711).